The primary structure comprises 246 residues: 1-(5-phosphoribosyl)-5-[(5-phosphoribosylamino)methylideneamino] imidazole-4-carboxamide isomerase (246 aa).

The active-site Proton acceptor is Asp8. Catalysis depends on Asp131, which acts as the Proton donor.

Belongs to the HisA/HisF family.

It localises to the cytoplasm. It catalyses the reaction 1-(5-phospho-beta-D-ribosyl)-5-[(5-phospho-beta-D-ribosylamino)methylideneamino]imidazole-4-carboxamide = 5-[(5-phospho-1-deoxy-D-ribulos-1-ylimino)methylamino]-1-(5-phospho-beta-D-ribosyl)imidazole-4-carboxamide. It participates in amino-acid biosynthesis; L-histidine biosynthesis; L-histidine from 5-phospho-alpha-D-ribose 1-diphosphate: step 4/9. In Chromobacterium violaceum (strain ATCC 12472 / DSM 30191 / JCM 1249 / CCUG 213 / NBRC 12614 / NCIMB 9131 / NCTC 9757 / MK), this protein is 1-(5-phosphoribosyl)-5-[(5-phosphoribosylamino)methylideneamino] imidazole-4-carboxamide isomerase.